The following is a 151-amino-acid chain: Methylglyoxal synthase (151 aa).

Positions 6–151 constitute an MGS-like domain; sequence RVMPAHKHIA…DYDAYLAERV (146 aa). Substrate is bound by residues His-19, Lys-23, 45–48, and 65–66; these read TGTT and SG. Asp-71 (proton donor/acceptor) is an active-site residue. His-98 is a binding site for substrate.

The protein belongs to the methylglyoxal synthase family.

The enzyme catalyses dihydroxyacetone phosphate = methylglyoxal + phosphate. Its function is as follows. Catalyzes the formation of methylglyoxal from dihydroxyacetone phosphate. The sequence is that of Methylglyoxal synthase from Aliivibrio fischeri (strain MJ11) (Vibrio fischeri).